Consider the following 282-residue polypeptide: Pyrroline-5-carboxylate reductase (282 aa).

This sequence belongs to the pyrroline-5-carboxylate reductase family.

The enzyme catalyses L-proline + NADP(+) = (S)-1-pyrroline-5-carboxylate + NADPH + 2 H(+). It carries out the reaction L-proline + NAD(+) = (S)-1-pyrroline-5-carboxylate + NADH + 2 H(+). It participates in amino-acid biosynthesis; L-proline biosynthesis; L-proline from L-glutamate 5-semialdehyde: step 1/1. The chain is Pyrroline-5-carboxylate reductase (pro3) from Schizosaccharomyces pombe (strain 972 / ATCC 24843) (Fission yeast).